Reading from the N-terminus, the 201-residue chain is Dephospho-CoA kinase (201 aa).

One can recognise a DPCK domain in the interval 3-201 (ILGLTGGIGS…QIDSRVGCKI (199 aa)). 11-16 (GSGKSL) is an ATP binding site.

It belongs to the CoaE family.

It localises to the cytoplasm. It carries out the reaction 3'-dephospho-CoA + ATP = ADP + CoA + H(+). Its pathway is cofactor biosynthesis; coenzyme A biosynthesis; CoA from (R)-pantothenate: step 5/5. Its function is as follows. Catalyzes the phosphorylation of the 3'-hydroxyl group of dephosphocoenzyme A to form coenzyme A. The polypeptide is Dephospho-CoA kinase (Ehrlichia ruminantium (strain Welgevonden)).